A 93-amino-acid polypeptide reads, in one-letter code: Parbolysin P2 (93 aa).

Disulfide bonds link Cys16/Cys37 and Cys22/Cys33.

The protein belongs to the worm cytolysin family. As to expression, localized within the skin and proboscis and are most readily isolated from body mucus secretions.

It localises to the secreted. Cytolysin that shows hemolytic activity (on bovine erythrocytes, HC(50)=5.75 mg/ml). This hemolytic activity is completely inhibited by small unilamelar vesicles composed of PC/PG, PC/PI and PC/PS in 1:1 molar ratios (with at least 100 mg/ml concentration). This is Parbolysin P2 from Parborlasia corrugatus (Antarctic nemertean worm).